The following is a 149-amino-acid chain: Large ribosomal subunit protein bL9 (149 aa).

This sequence belongs to the bacterial ribosomal protein bL9 family.

Its function is as follows. Binds to the 23S rRNA. The sequence is that of Large ribosomal subunit protein bL9 from Helicobacter pylori (strain G27).